Consider the following 161-residue polypeptide: Regulator of ribonuclease activity A (161 aa).

This sequence belongs to the RraA family. Homotrimer. Binds to both RNA-binding sites in the C-terminal region of Rne and to RhlB.

Its subcellular location is the cytoplasm. Globally modulates RNA abundance by binding to RNase E (Rne) and regulating its endonucleolytic activity. Can modulate Rne action in a substrate-dependent manner by altering the composition of the degradosome. Modulates RNA-binding and helicase activities of the degradosome. This Photobacterium profundum (strain SS9) protein is Regulator of ribonuclease activity A.